Here is a 454-residue protein sequence, read N- to C-terminus: NADP-specific glutamate dehydrogenase (454 aa).

Serine 2 is subject to N-acetylserine. The active site involves lysine 114.

It belongs to the Glu/Leu/Phe/Val dehydrogenases family. Homohexamer.

The enzyme catalyses L-glutamate + NADP(+) + H2O = 2-oxoglutarate + NH4(+) + NADPH + H(+). The polypeptide is NADP-specific glutamate dehydrogenase (GDH) (Neurospora sitophila (Chrysonilia sitophila)).